Reading from the N-terminus, the 171-residue chain is MAEKRNIFLVGPMGAGKSTIGRHLAQMLHLDFHDSDHEIEQRTGADIAWVFDVEGEEGFRRREAQVIGDLSERQGIVLATGGGSVQSKDIRNYLSARGIVVYLETTIDKQVARTQRDKRRPLLQVDDPREVLESLAEIRNPLYEEIADVIVKTDEQSAKIVANQIIEQLGF.

14–19 is a binding site for ATP; it reads GAGKST. Mg(2+) is bound at residue Ser-18. Asp-36, Arg-60, and Gly-82 together coordinate substrate. Arg-120 provides a ligand contact to ATP. Position 139 (Arg-139) interacts with substrate. Residue Gln-156 participates in ATP binding.

It belongs to the shikimate kinase family. In terms of assembly, monomer. It depends on Mg(2+) as a cofactor.

It is found in the cytoplasm. It carries out the reaction shikimate + ATP = 3-phosphoshikimate + ADP + H(+). The protein operates within metabolic intermediate biosynthesis; chorismate biosynthesis; chorismate from D-erythrose 4-phosphate and phosphoenolpyruvate: step 5/7. In terms of biological role, catalyzes the specific phosphorylation of the 3-hydroxyl group of shikimic acid using ATP as a cosubstrate. This chain is Shikimate kinase, found in Shewanella frigidimarina (strain NCIMB 400).